Reading from the N-terminus, the 415-residue chain is Arrestin domain-containing protein 4 (415 aa).

Short sequence motifs (PPxY motif) lie at residues 347 to 350 (PPNY) and 392 to 395 (PPLY).

It belongs to the arrestin family. Interacts with ADRB2. Interacts (via PPxY motifs) with ITCH, NEDD4L and WWP2. Interacts with AVPR2. Identified in a complex containing at least ARRDC4, AVPR2 and HGS. Interacts with SLC11A2; controls the incorporation of SLC11A2 into extracellular vesicles through an ubiquitination-dependent mechanism. Interacts with TRIM65.

The protein resides in the early endosome. It localises to the cell membrane. Its subcellular location is the cytoplasmic vesicle. Functionally, functions as an adapter recruiting ubiquitin-protein ligases to their specific substrates. Plays a role in endocytosis of activated G protein-coupled receptors (GPCRs). Through an ubiquitination-dependent mechanism also plays a role in the incorporation of SLC11A2 into extracellular vesicles. May play a role in glucose uptake. Participates in innate immune response by promoting IFIH1/MDA5 activation through interaction with TRIM65. The chain is Arrestin domain-containing protein 4 from Mus musculus (Mouse).